The following is a 1312-amino-acid chain: Beta-N-acetylhexosaminidase (1312 aa).

Residues 1–33 form the signal peptide; sequence MKHEKQQRFSIRKYAVGAASVLIGFAFQAQTVA. Polar residues predominate over residues 38–59; sequence TPTTTENQPTIHTVSDSPQSSE. The interval 38-178 is disordered; it reads TPTTTENQPT…ATEAGKERAA (141 aa). A compositionally biased stretch (basic and acidic residues) spans 118 to 177; that stretch reads AEKETANKKAEEASPKKEEAKEVDSKESNTDKTDKDKPAKKDEAKAEADKPATEAGKERA. Catalytic domain regions lie at residues 176-616 and 621-1046; these read RAAT…TPEA and EAKR…PAVT. 2 G5 domains span residues 1059 to 1138 and 1150 to 1230; these read NVET…GAPV and TTEV…GTMV. The segment at 1244–1290 is disordered; the sequence is EEKPKLEIPSQPAPSTAPAEESKVLPQDPAPVVTEKKLPETGTHDSA. Positions 1277–1286 are enriched in basic and acidic residues; it reads TEKKLPETGT. The LPXTG sorting signal motif lies at 1281-1285; that stretch reads LPETG. Position 1284 is a pentaglycyl murein peptidoglycan amidated threonine (T1284). A propeptide spans 1285-1312 (removed by sortase); the sequence is GTHDSAGLVVAGLMSTLAAYGLTKRKED.

The protein belongs to the glycosyl hydrolase 20 family.

Its subcellular location is the secreted. It is found in the cell wall. It carries out the reaction Hydrolysis of terminal non-reducing N-acetyl-D-hexosamine residues in N-acetyl-beta-D-hexosaminides.. This is Beta-N-acetylhexosaminidase (strH) from Streptococcus pneumoniae serotype 4 (strain ATCC BAA-334 / TIGR4).